Here is a 175-residue protein sequence, read N- to C-terminus: MFNFINNIQNYSKEAVQAAQYIGQGFMVTFDHMSRRPVTIQYPYEKLIPSERFRGRIHFEFDKCIACEVCVRVCPINLPVVNWEFQKEKKKKQLQTYSIDFGVCIFCGNCVEYCPTNCLSMTEEYELSVYDRHELNFDNFALGRLPSMVENDAMVKNMKGLGYLPKGVIESHASS.

2 4Fe-4S ferredoxin-type domains span residues 55–84 (GRIH…VNWE) and 95–124 (QTYS…MTEE). C64, C67, C70, C74, C104, C107, C110, and C114 together coordinate [4Fe-4S] cluster.

Belongs to the complex I 23 kDa subunit family. NDH is composed of at least 16 different subunits, 5 of which are encoded in the nucleus. [4Fe-4S] cluster serves as cofactor.

The protein localises to the plastid. It localises to the chloroplast thylakoid membrane. It catalyses the reaction a plastoquinone + NADH + (n+1) H(+)(in) = a plastoquinol + NAD(+) + n H(+)(out). The enzyme catalyses a plastoquinone + NADPH + (n+1) H(+)(in) = a plastoquinol + NADP(+) + n H(+)(out). Functionally, NDH shuttles electrons from NAD(P)H:plastoquinone, via FMN and iron-sulfur (Fe-S) centers, to quinones in the photosynthetic chain and possibly in a chloroplast respiratory chain. The immediate electron acceptor for the enzyme in this species is believed to be plastoquinone. Couples the redox reaction to proton translocation, and thus conserves the redox energy in a proton gradient. The chain is NAD(P)H-quinone oxidoreductase subunit I, chloroplastic from Chlorokybus atmophyticus (Soil alga).